Consider the following 297-residue polypeptide: Bifunctional protein FolD 1 (297 aa).

NADP(+) contacts are provided by residues 164–166 (GRS) and threonine 230.

The protein belongs to the tetrahydrofolate dehydrogenase/cyclohydrolase family. Homodimer.

The enzyme catalyses (6R)-5,10-methylene-5,6,7,8-tetrahydrofolate + NADP(+) = (6R)-5,10-methenyltetrahydrofolate + NADPH. It catalyses the reaction (6R)-5,10-methenyltetrahydrofolate + H2O = (6R)-10-formyltetrahydrofolate + H(+). It participates in one-carbon metabolism; tetrahydrofolate interconversion. Functionally, catalyzes the oxidation of 5,10-methylenetetrahydrofolate to 5,10-methenyltetrahydrofolate and then the hydrolysis of 5,10-methenyltetrahydrofolate to 10-formyltetrahydrofolate. This Rhodococcus jostii (strain RHA1) protein is Bifunctional protein FolD 1.